The following is a 156-amino-acid chain: Small ribosomal subunit protein uS7 (156 aa).

This sequence belongs to the universal ribosomal protein uS7 family. As to quaternary structure, part of the 30S ribosomal subunit. Contacts proteins S9 and S11.

One of the primary rRNA binding proteins, it binds directly to 16S rRNA where it nucleates assembly of the head domain of the 30S subunit. Is located at the subunit interface close to the decoding center, probably blocks exit of the E-site tRNA. In Rhodobacter capsulatus (Rhodopseudomonas capsulata), this protein is Small ribosomal subunit protein uS7.